Reading from the N-terminus, the 39-residue chain is Pro-opiomelanocortin (39 aa).

Position 1 is an N-acetylserine (S1). V13 carries the post-translational modification Valine amide. At S31 the chain carries Phosphoserine.

This sequence belongs to the POMC family. As to expression, expressed in the pituitary gland.

Its subcellular location is the secreted. Its function is as follows. Precursor protein for pituitary hormones that regulate stress and environmental adaptation. Functionally, stimulates the adrenal glands to release cortisol. In terms of biological role, anorexigenic peptide. Increases the pigmentation of skin by increasing melanin production in melanocytes. This Oryctolagus cuniculus (Rabbit) protein is Pro-opiomelanocortin (POMC).